The sequence spans 396 residues: Phosphoglycerate kinase (396 aa).

Residues 21–23 (DLN), Arg36, 59–62 (HFDR), Arg118, and Arg151 each bind substrate. ATP-binding positions include Lys201, Glu323, and 353–356 (GGDT).

This sequence belongs to the phosphoglycerate kinase family. As to quaternary structure, monomer.

Its subcellular location is the cytoplasm. It carries out the reaction (2R)-3-phosphoglycerate + ATP = (2R)-3-phospho-glyceroyl phosphate + ADP. It participates in carbohydrate degradation; glycolysis; pyruvate from D-glyceraldehyde 3-phosphate: step 2/5. This is Phosphoglycerate kinase from Granulibacter bethesdensis (strain ATCC BAA-1260 / CGDNIH1).